Consider the following 153-residue polypeptide: Actin-related protein 2/3 complex subunit 5-like protein (153 aa).

At Ser-64 the chain carries Phosphoserine.

This sequence belongs to the ARPC5 family. As to quaternary structure, may be a component of the Arp2/3 complex in which it may replace ARPC5.

It is found in the cytoplasm. Its subcellular location is the cytoskeleton. Its function is as follows. May function as component of the Arp2/3 complex which is involved in regulation of actin polymerization and together with an activating nucleation-promoting factor (NPF) mediates the formation of branched actin networks. The chain is Actin-related protein 2/3 complex subunit 5-like protein (ARPC5L) from Pongo abelii (Sumatran orangutan).